The sequence spans 385 residues: Methionine aminopeptidase 1 (385 aa).

The C6H2-type zinc finger occupies 6 to 59 (SRVCETEGCSSEAKLQCPTCIKLGIQGSYFCSQECFKGSWASHKLLHKKAKDDK). Positions 9, 14, 22, 25, 36, 40, 48, and 52 each coordinate Zn(2+). An a protein-binding site is contributed by histidine 203. Positions 220, 231, and 294 each coordinate Zn(2+). A protein is bound at residue histidine 301. Residues glutamate 327 and glutamate 358 each coordinate Zn(2+).

This sequence belongs to the peptidase M24A family. Methionine aminopeptidase type 1 subfamily. In terms of assembly, associates with the 60S ribosomal subunit of the 80S translational complex. Requires Zn(2+) as cofactor. Co(2+) is required as a cofactor. The cofactor is Mn(2+). Fe(2+) serves as cofactor.

It is found in the cytoplasm. The catalysed reaction is Release of N-terminal amino acids, preferentially methionine, from peptides and arylamides.. Its function is as follows. Cotranslationally removes the N-terminal methionine from nascent proteins. The N-terminal methionine is often cleaved when the second residue in the primary sequence is small and uncharged (Met-Ala-, Cys, Gly, Pro, Ser, Thr, or Val). This chain is Methionine aminopeptidase 1 (metap1), found in Xenopus tropicalis (Western clawed frog).